The primary structure comprises 246 residues: Probable transcriptional regulatory protein COSY_0365 (246 aa).

Belongs to the TACO1 family.

The protein localises to the cytoplasm. In Vesicomyosocius okutanii subsp. Calyptogena okutanii (strain HA), this protein is Probable transcriptional regulatory protein COSY_0365.